The chain runs to 333 residues: MDDKGGYRQINSAFNACAFDDILGSQMAQLPELPDVEQLTPRVLRILGQNPGKFTFQGTNTYVIGTGRQRLIIDTGGGEADWASLINDTLKARGITIARVLLTHWHGDHTGGVADLIRLYPDLEHHIYKNQPDRGQQNIYHAQTFDVEGATVRALHTPGHSEDHMCFILEEEGEPRAMFTGDTILGHGTSTMEDLSSFMDSLQNITDQQCEVGYSAHGAVIENLPLKMVQELRHKTRREAQVLTALASYASRGQRSLTTSELVAEIYGQSLNAETRAFALEPFIDQVLRKLAGDGKVGFEVRAGQRKWFIMDMMQGSIRPARSGSAREILVAA.

His-104, His-106, Asp-108, and His-109 together coordinate Zn(2+). The active-site Proton donor/acceptor is the Asp-108.

It belongs to the metallo-beta-lactamase superfamily. Zn(2+) is required as a cofactor.

It carries out the reaction atrochrysone carboxyl-[ACP] + H2O = atrochrysone carboxylate + holo-[ACP] + H(+). It participates in pigment biosynthesis. Its function is as follows. Atrochrysone carboxyl ACP thioesterase; part of the gene cluster that mediates the biosynthesis of the bianthraquinone cladofulvin, a conidial pigment not required for virulence but that plays a role in fitness and resistance to environmental stresses including UV light and low-temperature stress. The pathway begins with the synthesis of atrochrysone thioester by the polyketide synthase (PKS) claG. The atrochrysone carboxyl ACP thioesterase claF then breaks the thioester bond and releases the atrochrysone carboxylic acid from claG. This compound is decarboxylated by claH to yield emodin, which is further converted to chrysophanol hydroquinone by the reductase claC and the dehydratase claB. The cytochrome P450 monooxygenase claM then catalyzes the dimerization of nataloe-emodin to cladofulvin. This is Atrochrysone carboxyl ACP thioesterase from Passalora fulva (Tomato leaf mold).